The chain runs to 204 residues: Potassium-transporting ATPase KdpC subunit (204 aa).

Residues 21 to 41 (AALVIFVGLSLVTGVLYPVVV) form a helical membrane-spanning segment.

Belongs to the KdpC family. The system is composed of three essential subunits: KdpA, KdpB and KdpC.

The protein localises to the cell inner membrane. Its function is as follows. Part of the high-affinity ATP-driven potassium transport (or Kdp) system, which catalyzes the hydrolysis of ATP coupled with the electrogenic transport of potassium into the cytoplasm. This subunit acts as a catalytic chaperone that increases the ATP-binding affinity of the ATP-hydrolyzing subunit KdpB by the formation of a transient KdpB/KdpC/ATP ternary complex. The sequence is that of Potassium-transporting ATPase KdpC subunit from Ralstonia nicotianae (strain ATCC BAA-1114 / GMI1000) (Ralstonia solanacearum).